The sequence spans 205 residues: Cytochrome c biogenesis ATP-binding export protein CcmA (205 aa).

Residues 2–204 (LEVSNLTAIR…SPKLRKIKLG (203 aa)) enclose the ABC transporter domain. 34–41 (GRNGTGKT) contributes to the ATP binding site.

Belongs to the ABC transporter superfamily. CcmA exporter (TC 3.A.1.107) family. In terms of assembly, the complex is composed of two ATP-binding proteins (CcmA) and two transmembrane proteins (CcmB).

Its subcellular location is the cell inner membrane. The enzyme catalyses heme b(in) + ATP + H2O = heme b(out) + ADP + phosphate + H(+). In terms of biological role, part of the ABC transporter complex CcmAB involved in the biogenesis of c-type cytochromes; once thought to export heme, this seems not to be the case, but its exact role is uncertain. Responsible for energy coupling to the transport system. In Vibrio vulnificus (strain CMCP6), this protein is Cytochrome c biogenesis ATP-binding export protein CcmA.